Consider the following 509-residue polypeptide: Probable glycine dehydrogenase (decarboxylating) subunit 2 (509 aa).

Position 278 is an N6-(pyridoxal phosphate)lysine (Lys278).

It belongs to the GcvP family. C-terminal subunit subfamily. As to quaternary structure, the glycine cleavage system is composed of four proteins: P, T, L and H. In this organism, the P 'protein' is a heterodimer of two subunits. It depends on pyridoxal 5'-phosphate as a cofactor.

The enzyme catalyses N(6)-[(R)-lipoyl]-L-lysyl-[glycine-cleavage complex H protein] + glycine + H(+) = N(6)-[(R)-S(8)-aminomethyldihydrolipoyl]-L-lysyl-[glycine-cleavage complex H protein] + CO2. Functionally, the glycine cleavage system catalyzes the degradation of glycine. The P protein binds the alpha-amino group of glycine through its pyridoxal phosphate cofactor; CO(2) is released and the remaining methylamine moiety is then transferred to the lipoamide cofactor of the H protein. The polypeptide is Probable glycine dehydrogenase (decarboxylating) subunit 2 (Saccharolobus islandicus (strain Y.N.15.51 / Yellowstone #2) (Sulfolobus islandicus)).